A 105-amino-acid chain; its full sequence is Integration host factor subunit alpha (105 aa).

This sequence belongs to the bacterial histone-like protein family. In terms of assembly, heterodimer of an alpha and a beta chain.

This protein is one of the two subunits of integration host factor, a specific DNA-binding protein that functions in genetic recombination as well as in transcriptional and translational control. The polypeptide is Integration host factor subunit alpha (Rhodospirillum rubrum (strain ATCC 11170 / ATH 1.1.1 / DSM 467 / LMG 4362 / NCIMB 8255 / S1)).